The following is a 181-amino-acid chain: RING-H2 finger protein ATL72 (181 aa).

A helical transmembrane segment spans residues 34-54; it reads VIILAALLCALICALSLNSAL. An RING-type; atypical zinc finger spans residues 114-156; sequence CLICLGDFEDGEKVRVLPKCNHGFHVRCIDTWLLSRSSCPTCR.

The protein belongs to the RING-type zinc finger family. ATL subfamily.

It is found in the membrane. It carries out the reaction S-ubiquitinyl-[E2 ubiquitin-conjugating enzyme]-L-cysteine + [acceptor protein]-L-lysine = [E2 ubiquitin-conjugating enzyme]-L-cysteine + N(6)-ubiquitinyl-[acceptor protein]-L-lysine.. Its pathway is protein modification; protein ubiquitination. The polypeptide is RING-H2 finger protein ATL72 (ATL72) (Arabidopsis thaliana (Mouse-ear cress)).